Consider the following 134-residue polypeptide: Putative protein KRIP1 (134 aa).

The segment at 1–134 (MSPVHRSRTS…PDPALPLQML (134 aa)) is disordered. Composition is skewed to polar residues over residues 9 to 24 (TSQT…TLSF), 43 to 55 (SQPN…SHVS), and 64 to 79 (CSQS…TNPN). Pro residues predominate over residues 119-128 (PAKPALPDPA).

In terms of tissue distribution, abundant expression is found in prostate, restricted to cells of epithelial origin in normal and diseased glands. Very low expression is detected in pancreas and ovary.

It is found in the cytoplasm. Its subcellular location is the nucleus. The protein is Putative protein KRIP1 (KLKP1) of Homo sapiens (Human).